We begin with the raw amino-acid sequence, 267 residues long: tRNA pseudouridine synthase A (267 aa).

Residue D51 is the Nucleophile of the active site. Y109 is a substrate binding site.

It belongs to the tRNA pseudouridine synthase TruA family. In terms of assembly, homodimer.

The enzyme catalyses uridine(38/39/40) in tRNA = pseudouridine(38/39/40) in tRNA. Functionally, formation of pseudouridine at positions 38, 39 and 40 in the anticodon stem and loop of transfer RNAs. The protein is tRNA pseudouridine synthase A of Staphylococcus epidermidis (strain ATCC 35984 / DSM 28319 / BCRC 17069 / CCUG 31568 / BM 3577 / RP62A).